The primary structure comprises 116 residues: T cell receptor alpha variable 38-2/delta variable 8 (116 aa).

Positions 1 to 21 (MACPGFLWALVISTCLEFSMA) are cleaved as a signal peptide. The Ig-like domain occupies 22–116 (QTVTQSQPEM…AAMYFCAYRS (95 aa)). A disulfide bridge connects residues cysteine 43 and cysteine 112. N-linked (GlcNAc...) asparagine glycosylation occurs at asparagine 78.

As to quaternary structure, alpha-beta TR is a heterodimer composed of an alpha and beta chain; disulfide-linked. The alpha-beta TR is associated with the transmembrane signaling CD3 coreceptor proteins to form the TR-CD3 (TcR or TCR). The assembly of alpha-beta TR heterodimers with CD3 occurs in the endoplasmic reticulum where a single alpha-beta TR heterodimer associates with one CD3D-CD3E heterodimer, one CD3G-CD3E heterodimer and one CD247 homodimer forming a stable octameric structure. CD3D-CD3E and CD3G-CD3E heterodimers preferentially associate with TR alpha and TR beta chains, respectively. The association of the CD247 homodimer is the last step of TcR assembly in the endoplasmic reticulum and is required for transport to the cell surface.

It localises to the cell membrane. In terms of biological role, v region of the variable domain of T cell receptor (TR) alpha chain that participates in the antigen recognition. Alpha-beta T cell receptors are antigen specific receptors which are essential to the immune response and are present on the cell surface of T lymphocytes. Recognize peptide-major histocompatibility (MH) (pMH) complexes that are displayed by antigen presenting cells (APC), a prerequisite for efficient T cell adaptive immunity against pathogens. Binding of alpha-beta TR to pMH complex initiates TR-CD3 clustering on the cell surface and intracellular activation of LCK that phosphorylates the ITAM motifs of CD3G, CD3D, CD3E and CD247 enabling the recruitment of ZAP70. In turn ZAP70 phosphorylates LAT, which recruits numerous signaling molecules to form the LAT signalosome. The LAT signalosome propagates signal branching to three major signaling pathways, the calcium, the mitogen-activated protein kinase (MAPK) kinase and the nuclear factor NF-kappa-B (NF-kB) pathways, leading to the mobilization of transcription factors that are critical for gene expression and essential for T cell growth and differentiation. The T cell repertoire is generated in the thymus, by V-(D)-J rearrangement. This repertoire is then shaped by intrathymic selection events to generate a peripheral T cell pool of self-MH restricted, non-autoaggressive T cells. Post-thymic interaction of alpha-beta TR with the pMH complexes shapes TR structural and functional avidity. This chain is T cell receptor alpha variable 38-2/delta variable 8, found in Homo sapiens (Human).